Here is a 207-residue protein sequence, read N- to C-terminus: Inner membrane-spanning protein YciB (207 aa).

6 helical membrane-spanning segments follow: residues 3–23 (FLFDLLPIVLFFVAFKVAEGQ), 51–71 (VLLATLVVIVATFAQIGWLLL), 78–98 (TMLWVSLGLVTVLGGATVWFH), 105–125 (WKPSVLYWVMGTAFWLSHAVF), 150–170 (FMWIAFFAFMGLANLYVAYSF), and 178–198 (FKLFGGVGLMLLFTLAQGLYL).

Belongs to the YciB family.

Its subcellular location is the cell inner membrane. Plays a role in cell envelope biogenesis, maintenance of cell envelope integrity and membrane homeostasis. The polypeptide is Inner membrane-spanning protein YciB (Methylibium petroleiphilum (strain ATCC BAA-1232 / LMG 22953 / PM1)).